Consider the following 77-residue polypeptide: UPF0349 protein lmo2392 (77 aa).

It belongs to the UPF0349 family.

The polypeptide is UPF0349 protein lmo2392 (Listeria monocytogenes serovar 1/2a (strain ATCC BAA-679 / EGD-e)).